The sequence spans 285 residues: Probable endonuclease 4 (285 aa).

Zn(2+)-binding residues include histidine 67, histidine 107, glutamate 144, aspartate 177, histidine 180, histidine 214, aspartate 227, histidine 229, and glutamate 259.

This sequence belongs to the AP endonuclease 2 family. It depends on Zn(2+) as a cofactor.

The catalysed reaction is Endonucleolytic cleavage to 5'-phosphooligonucleotide end-products.. Endonuclease IV plays a role in DNA repair. It cleaves phosphodiester bonds at apurinic or apyrimidinic (AP) sites, generating a 3'-hydroxyl group and a 5'-terminal sugar phosphate. This Persephonella marina (strain DSM 14350 / EX-H1) protein is Probable endonuclease 4.